A 291-amino-acid polypeptide reads, in one-letter code: 4-hydroxy-tetrahydrodipicolinate synthase (291 aa).

T45 is a binding site for pyruvate. Y131 acts as the Proton donor/acceptor in catalysis. K159 (schiff-base intermediate with substrate) is an active-site residue. I202 is a binding site for pyruvate.

It belongs to the DapA family. In terms of assembly, homotetramer; dimer of dimers.

The protein localises to the cytoplasm. It carries out the reaction L-aspartate 4-semialdehyde + pyruvate = (2S,4S)-4-hydroxy-2,3,4,5-tetrahydrodipicolinate + H2O + H(+). Its pathway is amino-acid biosynthesis; L-lysine biosynthesis via DAP pathway; (S)-tetrahydrodipicolinate from L-aspartate: step 3/4. Functionally, catalyzes the condensation of (S)-aspartate-beta-semialdehyde [(S)-ASA] and pyruvate to 4-hydroxy-tetrahydrodipicolinate (HTPA). In Methanosarcina barkeri (strain Fusaro / DSM 804), this protein is 4-hydroxy-tetrahydrodipicolinate synthase.